Here is a 465-residue protein sequence, read N- to C-terminus: Phospholipase A1-II 5 (465 aa).

Serine 233 serves as the catalytic Acyl-ester intermediate. Residues serine 233, aspartate 297, and histidine 336 each act as charge relay system in the active site.

The protein belongs to the AB hydrolase superfamily. Lipase family.

It localises to the cytoplasm. Functionally, acylhydrolase that catalyzes the hydrolysis of phospholipids at the sn-1 position. This is Phospholipase A1-II 5 from Oryza sativa subsp. japonica (Rice).